Consider the following 422-residue polypeptide: N-acylglucosamine 2-epimerase (422 aa).

Residues 185 to 206 form a leucine-zipper region; it reads LLNLVEQLGEADEELAGISAEL.

This sequence belongs to the N-acylglucosamine 2-epimerase family. As to quaternary structure, homodimer. Forms a heterodimer with renin and inhibits its activity.

It carries out the reaction an N-acyl-D-glucosamine = an N-acyl-D-mannosamine. It functions in the pathway amino-sugar metabolism; N-acetylneuraminate degradation. In terms of biological role, catalyzes the interconversion of N-acetylglucosamine to N-acetylmannosamine. Involved in the N-glycolylneuraminic acid (Neu5Gc) degradation pathway. This chain is N-acylglucosamine 2-epimerase (RENBP), found in Bos taurus (Bovine).